Here is a 160-residue protein sequence, read N- to C-terminus: Nuclear transcription factor Y subunit B-5 (160 aa).

The DNA-binding element occupies Leu56–Gly62. Positions Met83–Val94 are subunit association domain (SAD).

The protein belongs to the NFYB/HAP3 subunit family. Heterotrimeric transcription factor composed of three components, NF-YA, NF-YB and NF-YC. NF-YB and NF-YC must interact and dimerize for NF-YA association and DNA binding. As to expression, expressed in flowers and siliques.

The protein localises to the nucleus. In terms of biological role, component of the NF-Y/HAP transcription factor complex. The NF-Y complex stimulates the transcription of various genes by recognizing and binding to a CCAAT motif in promoters. This is Nuclear transcription factor Y subunit B-5 (NFYB5) from Arabidopsis thaliana (Mouse-ear cress).